A 357-amino-acid chain; its full sequence is UDP-N-acetylglucosamine--N-acetylmuramyl-(pentapeptide) pyrophosphoryl-undecaprenol N-acetylglucosamine transferase (357 aa).

UDP-N-acetyl-alpha-D-glucosamine-binding positions include 12–14, asparagine 124, arginine 162, serine 190, isoleucine 244, 263–268, and glutamine 289; these read TGG and ALTVAE.

This sequence belongs to the glycosyltransferase 28 family. MurG subfamily.

It localises to the cell inner membrane. It carries out the reaction di-trans,octa-cis-undecaprenyl diphospho-N-acetyl-alpha-D-muramoyl-L-alanyl-D-glutamyl-meso-2,6-diaminopimeloyl-D-alanyl-D-alanine + UDP-N-acetyl-alpha-D-glucosamine = di-trans,octa-cis-undecaprenyl diphospho-[N-acetyl-alpha-D-glucosaminyl-(1-&gt;4)]-N-acetyl-alpha-D-muramoyl-L-alanyl-D-glutamyl-meso-2,6-diaminopimeloyl-D-alanyl-D-alanine + UDP + H(+). It functions in the pathway cell wall biogenesis; peptidoglycan biosynthesis. In terms of biological role, cell wall formation. Catalyzes the transfer of a GlcNAc subunit on undecaprenyl-pyrophosphoryl-MurNAc-pentapeptide (lipid intermediate I) to form undecaprenyl-pyrophosphoryl-MurNAc-(pentapeptide)GlcNAc (lipid intermediate II). The protein is UDP-N-acetylglucosamine--N-acetylmuramyl-(pentapeptide) pyrophosphoryl-undecaprenol N-acetylglucosamine transferase of Alkalilimnicola ehrlichii (strain ATCC BAA-1101 / DSM 17681 / MLHE-1).